A 148-amino-acid chain; its full sequence is Large ribosomal subunit protein bL9 (148 aa).

Belongs to the bacterial ribosomal protein bL9 family.

Binds to the 23S rRNA. The polypeptide is Large ribosomal subunit protein bL9 (Azotobacter vinelandii (strain DJ / ATCC BAA-1303)).